The following is a 288-amino-acid chain: Prohibitin-1, mitochondrial (288 aa).

At 1-10 the chain is on the mitochondrial matrix side; sequence MNNVKVPKIP. Residues 11–30 form a helical; Signal-anchor for type II membrane protein membrane-spanning segment; it reads GGGAISTLLKVGIIGGLGLY. At 31–288 the chain is on the mitochondrial intermembrane side; that stretch reads GATHSLYNVE…GMNLDVDAKN (258 aa). A coiled-coil region spans residues 186–219; it reads KEFTAAIEAKQVAAQEAERAKFIVEKAEQDKRSA.

This sequence belongs to the prohibitin family. In terms of assembly, component of a prohibitin multimeric complex in mitochondrial membranes. Mostly expressed in proliferative tissues, including vasculature, shoot and root apical tissues.

The protein resides in the mitochondrion inner membrane. Its function is as follows. Prohibitin probably acts as a holdase/unfoldase for the stabilization of newly synthesized mitochondrial proteins. This Arabidopsis thaliana (Mouse-ear cress) protein is Prohibitin-1, mitochondrial (PHB1).